Reading from the N-terminus, the 619-residue chain is Glucokinase regulatory protein (619 aa).

SIS domains follow at residues 90–283 (VQEV…AESN) and 319–498 (TATS…LRGK). A keto-D-fructose 6-phosphate-binding site is contributed by 107–109 (CGT). Beta-D-fructose 1-phosphate is bound by residues 109–110 (TS), E153, 179–181 (SCG), and E347. Keto-D-fructose 6-phosphate-binding positions include 179–183 (SCGLS) and E347. Residues 462–464 (ILF) are essential for interaction with GCK. K513 is a binding site for keto-D-fructose 6-phosphate. Residue K513 coordinates beta-D-fructose 1-phosphate.

The protein belongs to the GCKR family. In terms of assembly, interacts (fructose 6-phosphate bound form) with gck.

Its subcellular location is the nucleus. It is found in the cytoplasm. The protein resides in the mitochondrion. In terms of biological role, regulates glucokinase (gck) by forming an inactive complex with this enzyme. The affinity of gckr for gck is modulated by fructose metabolites: gckr with bound fructose 6-phosphate has increased affinity for gck, while gckr with bound fructose 1-phosphate has strongly decreased affinity for gck and does not inhibit gck activity. This is Glucokinase regulatory protein from Xenopus laevis (African clawed frog).